We begin with the raw amino-acid sequence, 215 residues long: Cytochrome b6 (215 aa).

A helical transmembrane segment spans residues 32–52 (IFYCIGGITFTCFIMQVASGF). Residue C35 coordinates heme c. 2 residues coordinate heme b: H86 and H100. The next 3 membrane-spanning stretches (helical) occupy residues 90–110 (ASMMVLTMILHVFRVYLTGGF), 116–136 (LTWVTGVILAVCTVSFGVTGY), and 186–206 (LHTFVLPLLTAVFMLAHFLMI). 2 residues coordinate heme b: H187 and H202.

It belongs to the cytochrome b family. PetB subfamily. In terms of assembly, the 4 large subunits of the cytochrome b6-f complex are cytochrome b6, subunit IV (17 kDa polypeptide, PetD), cytochrome f and the Rieske protein, while the 4 small subunits are PetG, PetL, PetM and PetN. The complex functions as a dimer. Heme b is required as a cofactor. The cofactor is heme c.

The protein localises to the plastid. Its subcellular location is the chloroplast thylakoid membrane. Functionally, component of the cytochrome b6-f complex, which mediates electron transfer between photosystem II (PSII) and photosystem I (PSI), cyclic electron flow around PSI, and state transitions. This chain is Cytochrome b6, found in Mesostigma viride (Green alga).